The primary structure comprises 339 residues: Purple acid phosphatase 4 (339 aa).

An N-terminal signal peptide occupies residues 1-31 (MSSKFDIGSLSIVMTLLICFLLLSLAPKLEA). Position 53 (D53) interacts with Fe cation. N-linked (GlcNAc...) asparagine glycosylation is present at N61. D86 and Y89 together coordinate Fe cation. D86 is a binding site for Zn(2+). Residues N124 and H218 each coordinate Zn(2+). H227 (proton donor) is an active-site residue. Residue H253 participates in Zn(2+) binding. Residue 253–255 (HDH) participates in substrate binding. A Fe cation-binding site is contributed by H255. A glycan (N-linked (GlcNAc...) asparagine) is linked at N284.

Belongs to the metallophosphoesterase superfamily. Purple acid phosphatase family. As to quaternary structure, homodimer. Fe cation serves as cofactor. Zn(2+) is required as a cofactor. Expressed in roots, stems, leaves, flowers and siliques.

The protein localises to the secreted. The enzyme catalyses a phosphate monoester + H2O = an alcohol + phosphate. The chain is Purple acid phosphatase 4 (PAP4) from Arabidopsis thaliana (Mouse-ear cress).